The following is a 651-amino-acid chain: Acetyl-coenzyme A synthetase (651 aa).

CoA is bound by residues 189–192 (RGGK), T311, and N335. Residues 387–389 (GEP), 411–416 (DTWWQT), D500, and R515 contribute to the ATP site. A CoA-binding site is contributed by S523. R526 contributes to the ATP binding site. 3 residues coordinate Mg(2+): V537, H539, and V542. R586 contacts CoA. Residue K611 is modified to N6-acetyllysine.

This sequence belongs to the ATP-dependent AMP-binding enzyme family. Requires Mg(2+) as cofactor. In terms of processing, acetylated. Deacetylation by the SIR2-homolog deacetylase activates the enzyme.

It catalyses the reaction acetate + ATP + CoA = acetyl-CoA + AMP + diphosphate. In terms of biological role, catalyzes the conversion of acetate into acetyl-CoA (AcCoA), an essential intermediate at the junction of anabolic and catabolic pathways. AcsA undergoes a two-step reaction. In the first half reaction, AcsA combines acetate with ATP to form acetyl-adenylate (AcAMP) intermediate. In the second half reaction, it can then transfer the acetyl group from AcAMP to the sulfhydryl group of CoA, forming the product AcCoA. The polypeptide is Acetyl-coenzyme A synthetase (Brucella melitensis biotype 1 (strain ATCC 23456 / CCUG 17765 / NCTC 10094 / 16M)).